The following is a 251-amino-acid chain: Imidazole glycerol phosphate synthase subunit HisF (251 aa).

Catalysis depends on residues Asp11 and Asp130.

Belongs to the HisA/HisF family. As to quaternary structure, heterodimer of HisH and HisF.

It is found in the cytoplasm. It catalyses the reaction 5-[(5-phospho-1-deoxy-D-ribulos-1-ylimino)methylamino]-1-(5-phospho-beta-D-ribosyl)imidazole-4-carboxamide + L-glutamine = D-erythro-1-(imidazol-4-yl)glycerol 3-phosphate + 5-amino-1-(5-phospho-beta-D-ribosyl)imidazole-4-carboxamide + L-glutamate + H(+). It functions in the pathway amino-acid biosynthesis; L-histidine biosynthesis; L-histidine from 5-phospho-alpha-D-ribose 1-diphosphate: step 5/9. In terms of biological role, IGPS catalyzes the conversion of PRFAR and glutamine to IGP, AICAR and glutamate. The HisF subunit catalyzes the cyclization activity that produces IGP and AICAR from PRFAR using the ammonia provided by the HisH subunit. The protein is Imidazole glycerol phosphate synthase subunit HisF of Listeria welshimeri serovar 6b (strain ATCC 35897 / DSM 20650 / CCUG 15529 / CIP 8149 / NCTC 11857 / SLCC 5334 / V8).